A 298-amino-acid chain; its full sequence is Estradiol 17-beta-dehydrogenase 11 (298 aa).

The first 21 residues, 1–21 (MKYLLDLILLLPLLIVFSIES), serve as a signal peptide directing secretion. 40-64 (LITGAGHGIGRLTAYEFAKLNTKLV) contributes to the NADP(+) binding site. Ser-172 provides a ligand contact to substrate. Tyr-185 functions as the Proton acceptor in the catalytic mechanism.

Belongs to the short-chain dehydrogenases/reductases (SDR) family. 17-beta-HSD 3 subfamily. Expressed in the liver (at protein level). Also expressed in the intestine and, at much lower levels, in the kidney.

The protein resides in the endoplasmic reticulum. It localises to the lipid droplet. The catalysed reaction is 17beta-estradiol + NAD(+) = estrone + NADH + H(+). It catalyses the reaction 17beta-estradiol + NADP(+) = estrone + NADPH + H(+). Functionally, can convert androstan-3-alpha,17-beta-diol (3-alpha-diol) to androsterone in vitro, suggesting that it may participate in androgen metabolism during steroidogenesis. May act by metabolizing compounds that stimulate steroid synthesis and/or by generating metabolites that inhibit it. Has no activity toward DHEA (dehydroepiandrosterone), or A-dione (4-androste-3,17-dione), and only a slight activity toward testosterone to A-dione. This is Estradiol 17-beta-dehydrogenase 11 (Hsd17b11) from Mus musculus (Mouse).